We begin with the raw amino-acid sequence, 339 residues long: Small ribosomal subunit protein mS27 (339 aa).

A mitochondrion-targeting transit peptide spans Met-1–Phe-37.

This sequence belongs to the mitochondrion-specific ribosomal protein mS27 family. Component of the mitochondrial small ribosomal subunit (mt-SSU). Mature yeast 74S mitochondrial ribosomes consist of a small (37S) and a large (54S) subunit. The 37S small subunit contains a 15S ribosomal RNA (15S mt-rRNA) and 34 different proteins. The 54S large subunit contains a 21S rRNA (21S mt-rRNA) and 46 different proteins.

Its subcellular location is the mitochondrion. In terms of biological role, component of the mitochondrial ribosome (mitoribosome), a dedicated translation machinery responsible for the synthesis of mitochondrial genome-encoded proteins, including at least some of the essential transmembrane subunits of the mitochondrial respiratory chain. The mitoribosomes are attached to the mitochondrial inner membrane and translation products are cotranslationally integrated into the membrane. This is Small ribosomal subunit protein mS27 (MRP13) from Saccharomyces cerevisiae (strain ATCC 204508 / S288c) (Baker's yeast).